The following is a 196-amino-acid chain: Pyridoxal 5'-phosphate synthase subunit PdxT (196 aa).

47–49 (GES) serves as a coordination point for L-glutamine. Cys79 serves as the catalytic Nucleophile. L-glutamine-binding positions include Arg106 and 134 to 135 (IR). Catalysis depends on charge relay system residues His170 and Glu172.

This sequence belongs to the glutaminase PdxT/SNO family. As to quaternary structure, in the presence of PdxS, forms a dodecamer of heterodimers. Only shows activity in the heterodimer.

It carries out the reaction aldehydo-D-ribose 5-phosphate + D-glyceraldehyde 3-phosphate + L-glutamine = pyridoxal 5'-phosphate + L-glutamate + phosphate + 3 H2O + H(+). The catalysed reaction is L-glutamine + H2O = L-glutamate + NH4(+). The protein operates within cofactor biosynthesis; pyridoxal 5'-phosphate biosynthesis. Catalyzes the hydrolysis of glutamine to glutamate and ammonia as part of the biosynthesis of pyridoxal 5'-phosphate. The resulting ammonia molecule is channeled to the active site of PdxS. This chain is Pyridoxal 5'-phosphate synthase subunit PdxT, found in Bacillus subtilis (strain 168).